The chain runs to 289 residues: ATP synthase gamma chain (289 aa).

The protein belongs to the ATPase gamma chain family. F-type ATPases have 2 components, CF(1) - the catalytic core - and CF(0) - the membrane proton channel. CF(1) has five subunits: alpha(3), beta(3), gamma(1), delta(1), epsilon(1). CF(0) has three main subunits: a, b and c.

The protein localises to the cell inner membrane. Its function is as follows. Produces ATP from ADP in the presence of a proton gradient across the membrane. The gamma chain is believed to be important in regulating ATPase activity and the flow of protons through the CF(0) complex. The sequence is that of ATP synthase gamma chain from Histophilus somni (strain 2336) (Haemophilus somnus).